Consider the following 565-residue polypeptide: NAD-dependent malic enzyme (565 aa).

Catalysis depends on Tyr104, which acts as the Proton donor. Arg157 serves as a coordination point for NAD(+). The Proton acceptor role is filled by Lys175. Residues Glu246, Asp247, and Asp270 each coordinate a divalent metal cation. NAD(+) is bound by residues Asp270 and Asn418.

The protein belongs to the malic enzymes family. In terms of assembly, homotetramer. Requires Mg(2+) as cofactor. Mn(2+) serves as cofactor.

It carries out the reaction (S)-malate + NAD(+) = pyruvate + CO2 + NADH. The enzyme catalyses oxaloacetate + H(+) = pyruvate + CO2. The sequence is that of NAD-dependent malic enzyme from Erwinia tasmaniensis (strain DSM 17950 / CFBP 7177 / CIP 109463 / NCPPB 4357 / Et1/99).